Here is a 277-residue protein sequence, read N- to C-terminus: Bis(5'-nucleosyl)-tetraphosphatase, symmetrical (277 aa).

It belongs to the Ap4A hydrolase family.

It carries out the reaction P(1),P(4)-bis(5'-adenosyl) tetraphosphate + H2O = 2 ADP + 2 H(+). In terms of biological role, hydrolyzes diadenosine 5',5'''-P1,P4-tetraphosphate to yield ADP. The sequence is that of Bis(5'-nucleosyl)-tetraphosphatase, symmetrical from Azotobacter vinelandii (strain DJ / ATCC BAA-1303).